We begin with the raw amino-acid sequence, 353 residues long: Variable large protein 12 (353 aa).

A signal peptide spans 1-18 (MRKRISAIIMTLFMVLAS). Cys-19 is lipidated: N-palmitoyl cysteine. The S-diacylglycerol cysteine moiety is linked to residue Cys-19.

This sequence belongs to the variable large protein (Vlp) family. Beta subfamily.

The protein resides in the cell outer membrane. In terms of biological role, the Vlp and Vsp proteins are antigenically distinct proteins, only one vlp or vsp gene is transcriptionally active at any one time. Switching between these genes is a mechanism of host immune response evasion. This Borrelia hermsii protein is Variable large protein 12.